The chain runs to 185 residues: Alpha-S1-casein (185 aa).

The N-terminal stretch at 1–15 is a signal peptide; that stretch reads MRLLILTCLVAVALA. Ser31, Ser33, Ser41, Ser71, Ser85, Ser86, Ser88, Ser89, Ser90, and Ser91 each carry phosphoserine.

Belongs to the alpha-casein family. As to quaternary structure, heteromultimers of alpha-s1 casein and kappa-casein; disulfide-linked. Post-translationally, not glycosylated. Mammary gland specific. Secreted in milk.

The protein localises to the secreted. Important role in the capacity of milk to transport calcium phosphate. Functionally, casoxin D acts as opioid antagonist and has vasorelaxing activity mediated by bradykinin B1 receptors. This Homo sapiens (Human) protein is Alpha-S1-casein (CSN1S1).